The sequence spans 556 residues: Oxygen-dependent choline dehydrogenase (556 aa).

Position 4–33 (4–33 (DYIIIGAGSAGNVLATRLTEDPNTTVLLLE)) interacts with FAD. His473 (proton acceptor) is an active-site residue.

This sequence belongs to the GMC oxidoreductase family. FAD serves as cofactor.

Its subcellular location is the cell membrane. It carries out the reaction choline + A = betaine aldehyde + AH2. The enzyme catalyses betaine aldehyde + NAD(+) + H2O = glycine betaine + NADH + 2 H(+). It participates in amine and polyamine biosynthesis; betaine biosynthesis via choline pathway; betaine aldehyde from choline (cytochrome c reductase route): step 1/1. Its function is as follows. Involved in the biosynthesis of the osmoprotectant glycine betaine. Catalyzes the oxidation of choline to betaine aldehyde and betaine aldehyde to glycine betaine at the same rate. This is Oxygen-dependent choline dehydrogenase from Escherichia coli O6:H1 (strain CFT073 / ATCC 700928 / UPEC).